The sequence spans 79 residues: UPF0154 protein SAG1601 (79 aa).

Residues 5-25 form a helical membrane-spanning segment; sequence IWILLIIVALFGGLVGGIFIA.

This sequence belongs to the UPF0154 family.

Its subcellular location is the membrane. In Streptococcus agalactiae serotype V (strain ATCC BAA-611 / 2603 V/R), this protein is UPF0154 protein SAG1601.